Here is a 132-residue protein sequence, read N- to C-terminus: Small ribosomal subunit protein uS8 (132 aa).

The protein belongs to the universal ribosomal protein uS8 family. In terms of assembly, part of the 30S ribosomal subunit. Contacts proteins S5 and S12.

Functionally, one of the primary rRNA binding proteins, it binds directly to 16S rRNA central domain where it helps coordinate assembly of the platform of the 30S subunit. This is Small ribosomal subunit protein uS8 from Streptococcus pneumoniae serotype 19F (strain G54).